The sequence spans 401 residues: Phosphoglycerate kinase (401 aa).

Substrate is bound by residues 20-22 (DFN), R35, 58-61 (HLGR), R117, and R154. Residues K204, G298, E329, and 358–361 (GGDS) each bind ATP.

The protein belongs to the phosphoglycerate kinase family. In terms of assembly, monomer.

Its subcellular location is the cytoplasm. It carries out the reaction (2R)-3-phosphoglycerate + ATP = (2R)-3-phospho-glyceroyl phosphate + ADP. It functions in the pathway carbohydrate degradation; glycolysis; pyruvate from D-glyceraldehyde 3-phosphate: step 2/5. This is Phosphoglycerate kinase from Bifidobacterium longum (strain DJO10A).